A 1088-amino-acid chain; its full sequence is RNA-directed RNA polymerase (1088 aa).

One can recognise a RdRp catalytic domain in the interval 501-687 (LSYGDVTRFL…AKRYIAGGKI (187 aa)).

It belongs to the reoviridae RNA-directed RNA polymerase family. In terms of assembly, interacts with VP3 (Potential). Interacts with VP2; this interaction activates VP1. Interacts with NSP5; this interaction is probably necessary for the formation of functional virus factories. Interacts with NSP2; this interaction is weak. Mg(2+) is required as a cofactor.

It localises to the virion. The catalysed reaction is RNA(n) + a ribonucleoside 5'-triphosphate = RNA(n+1) + diphosphate. Functionally, RNA-directed RNA polymerase that is involved in both transcription and genome replication. Together with VP3 capping enzyme, forms an enzyme complex positioned near the channels situated at each of the five-fold vertices of the core. Following infection, the outermost layer of the virus is lost, leaving a double-layered particle (DLP) made up of the core and VP6 shell. VP1 then catalyzes the transcription of fully conservative plus-strand genomic RNAs that are extruded through the DLP's channels into the cytoplasm where they function as mRNAs for translation of viral proteins. One copy of each of the viral (+)RNAs is also recruited during core assembly, together with newly synthesized polymerase complexes and VP2. The polymerase of these novo-formed particles catalyzes the synthesis of complementary minus-strands leading to dsRNA formation. To do so, the polymerase specifically recognizes and binds 4 bases 5'-UGUG-3' in the conserved 3'-sequence of plus-strand RNA templates. VP2 presumably activates the autoinhibited VP1-RNA complex to coordinate packaging and genome replication. Once dsRNA synthesis is complete, the polymerase switches to the transcriptional mode, thus providing secondary transcription. This chain is RNA-directed RNA polymerase, found in Homo sapiens (Human).